The primary structure comprises 754 residues: MMSTYKRATLDEEDLVDSLSESDVYPNHLQVNFRGPRNGQRCWAARTPVEKRLVVLVALLAAALVACLAVLGIQYQTRTPSVCLSEACISVTSSILSSMDPTVDPCQDFFTYACGGWIKANPVPDGHSRWGTFSNLWEHNQAIIKHLLENSTASVSEAERKAQVYYRACMNETRIEELKAKPLMELIEKLGGWNITGPWDKDNFQDTLQVVTSHYHTSPFFSVYVSADSKNSNSNVIQVDQSGLGLPSRDYYLNKTENEKVLTGYLNYMVQLGKLLGGGAEDTIRPQMQQILDFETALANITIPQEKRRDEELIYHKVTAAELQTLAPAINWLPFLNTIFYPVEINESEPIVIYDKEYLSKVSTLINSTDKCLLNNYMIWNLVRKTSSFLDQRFQDADEKFMEVMYGTKKTCLPRWKFCVSDTENTLGFALGPMFVKATFAEDSKNIASEIILEIKKAFEESLSTLKWMDEDTRKSAKEKADAIYNMIGYPNFIMDPKELDKVFNDYTAVPDLYFENAMRFFNFSWRVTADQLRKAPNRDQWSMTPPMVNAYYSPTKNEIVFPAGILQAPFYTRSSPNALNFGGIGVVVGHELTHAFDDQGREYDKDGNLRPWWKNSSVEAFKQQTACMVEQYGNYSVNGEPVNGRHTLGENIADNGGLKAAYRAYQNWVKKNGAEQTLPTLGLTNNQLFFLSFAQVWCSVRTPESSHEGLITDPHSPSRFRVIGSISNSKEFSEHFHCPPGSPMNPHHKCEVW.

Over 1–52 (MMSTYKRATLDEEDLVDSLSESDVYPNHLQVNFRGPRNGQRCWAARTPVEKR) the chain is Cytoplasmic. Thr9 carries the post-translational modification Phosphothreonine. Residues 53-73 (LVVLVALLAAALVACLAVLGI) form a helical; Signal-anchor for type II membrane protein membrane-spanning segment. Over 74 to 754 (QYQTRTPSVC…MNPHHKCEVW (681 aa)) the chain is Extracellular. The Peptidase M13 domain occupies 82–754 (VCLSEACISV…MNPHHKCEVW (673 aa)). 5 cysteine pairs are disulfide-bonded: Cys83–Cys88, Cys106–Cys739, Cys114–Cys699, Cys169–Cys419, and Cys628–Cys751. Asn150, Asn171, Asn194, Asn254, Asn300, Asn346, Asn367, and Asn523 each carry an N-linked (GlcNAc...) asparagine glycan. Position 591 (His591) interacts with Zn(2+). Glu592 is an active-site residue. Residue His595 coordinates Zn(2+). 2 N-linked (GlcNAc...) asparagine glycosylation sites follow: Asn616 and Asn635. Zn(2+) is bound at residue Glu651. Asp655 (proton donor) is an active-site residue.

Belongs to the peptidase M13 family. In terms of assembly, homodimer; disulfide-linked. Interacts with PPP1R16B. Interacts with TSPAN8; this interaction recruits the endothelin converting enzyme ECE1 to tetraspanin-enriched microdomains and positively modulates its enzymatic activity. Zn(2+) is required as a cofactor.

It localises to the cell membrane. The catalysed reaction is Hydrolysis of the 21-Trp-|-Val-22 bond in big endothelin to form endothelin 1.. Inhibited by phosphoramidon. Its function is as follows. Converts big endothelin-1 to endothelin-1. In Bos taurus (Bovine), this protein is Endothelin-converting enzyme 1 (ECE1).